The chain runs to 257 residues: Reticulon-like protein B4 (257 aa).

The interval 19–42 (IHGHGDSSSLSDSDDDKKSTSSSS) is disordered. Residues 68 to 257 (PADIFLWRNK…PRGALNKKKD (190 aa)) form the Reticulon domain. The next 3 helical transmembrane spans lie at 78–98 (KVSG…ELFE), 99–119 (YHLL…LFLW), and 173–193 (FILV…YNFL).

As to quaternary structure, interacts with VirB2.

It localises to the endoplasmic reticulum membrane. Its function is as follows. Plays a role in the Agrobacterium-mediated plant transformation via its interaction with VirB2, the major component of the T-pilus. The protein is Reticulon-like protein B4 (RTNLB4) of Arabidopsis thaliana (Mouse-ear cress).